A 445-amino-acid chain; its full sequence is Sterile alpha motif domain-containing protein 7 (445 aa).

The segment at 98 to 172 is required for localization to nuclear polycomb bodies; it reads HAARAEMEMY…HLQGNPILLA (75 aa). Residues 193–282 form a disordered region; sequence YQKPPESDTE…WDDGKGKPSE (90 aa). Positions 227–244 are enriched in basic and acidic residues; sequence IKDPDIEVDNQQKPRVAD. Residues 324-378 form the SAM domain; sequence WTVDDVYNFIRSLPGCSDYAQVFKDHAIDGETLPLLTEQHLRGTMGLKLGPALKI. Positions 425-445 are disordered; sequence SIPGPQDLLSPKRTEQDVMRN. The segment covering 434–445 has biased composition (basic and acidic residues); sequence SPKRTEQDVMRN.

Monomer, homodimer and homooligomer. Component of a Polycomb group (PcG) multiprotein PRC1-like complex. Interacts with PHC2 and NR2E3. Interacts with RNF1 in a PHC2-dependent manner. Interacts with SAMD11. As to expression, expressed in the retina and the pineal gland. In the retina, it is predominantly expressed in the outer nuclear layer and developing rod photoreceptors.

The protein resides in the nucleus. It localises to the cytoplasm. Component of a Polycomb group (PcG) multiprotein PRC1-like complex, essential for establishing rod photoreceptor cell identity and function by silencing nonrod gene expression in developing rod photoreceptor cells. Via its association with the PRC1-like complex, promotes epigenetic repressive marks H3K27me3 and H2AK119ub marks in nonrod genes, silencing their transcription. Represses Crx-controlled photoreceptor-specific gene expression. In Mus musculus (Mouse), this protein is Sterile alpha motif domain-containing protein 7 (Samd7).